The chain runs to 282 residues: uncharacterized protein (282 aa).

A coiled-coil region spans residues leucine 205–alanine 277.

This is an uncharacterized protein from Treponema pallidum (strain Nichols).